Here is a 566-residue protein sequence, read N- to C-terminus: 15-cis-phytoene desaturase, chloroplastic/chromoplastic (566 aa).

The N-terminal 86 residues, 1 to 86, are a transit peptide targeting the chloroplast and chromoplast; sequence MVVFGNVSAA…ASLSASFRSA (86 aa). Residues Ala103, 122–123, Lys130, 147–148, and Tyr153 contribute to the FAD site; these read EA and HI. Arg288 is a binding site for substrate. 2 residues coordinate FAD: Ile330 and Asp519. Ala527 serves as a coordination point for substrate. Met529 lines the FAD pocket.

Belongs to the carotenoid/retinoid oxidoreductase family. Homotetramer. FAD is required as a cofactor.

It is found in the plastid. Its subcellular location is the chloroplast. It localises to the chromoplast. The protein localises to the membrane. The enzyme catalyses 2 a plastoquinone + 15-cis-phytoene = 9,9',15-tri-cis-zeta-carotene + 2 a plastoquinol. It participates in carotenoid biosynthesis; lycopene biosynthesis. Converts phytoene into zeta-carotene via the intermediary of phytofluene by the symmetrical introduction of two double bonds at the C-11 and C-11' positions of phytoene with a concomitant isomerization of two neighboring double bonds at the C9 and C9' positions from trans to cis. This is 15-cis-phytoene desaturase, chloroplastic/chromoplastic (PDS) from Arabidopsis thaliana (Mouse-ear cress).